We begin with the raw amino-acid sequence, 909 residues long: Coatomer subunit beta'-3 (909 aa).

WD repeat units lie at residues 13–52, 55–94, 97–136, 140–180, 183–224, 227–266, 269–309, 351–390, and 461–501; these read QRSE…ITKS, VTEL…KVKV, AHSD…ACTQ, GHSH…PNFT, AHQK…CVQT, GHTH…LENT, YGLE…ASMD, TCDL…RSFG, and QIDV…SHFD. The disordered stretch occupies residues 862 to 909; it reads EENGHVENEGDEEEQQEEEVNEEEGVVDADSTDGAVLVNGSEVLTPHP. Over residues 870-892 the composition is skewed to acidic residues; that stretch reads EGDEEEQQEEEVNEEEGVVDADS.

It belongs to the WD repeat COPB2 family. As to quaternary structure, oligomeric complex that consists of at least the alpha, beta, beta', gamma, delta, epsilon and zeta subunits.

The protein localises to the cytoplasm. It localises to the golgi apparatus membrane. It is found in the cytoplasmic vesicle. The protein resides in the COPI-coated vesicle membrane. Its function is as follows. The coatomer is a cytosolic protein complex that binds to dilysine motifs and reversibly associates with Golgi non-clathrin-coated vesicles, which further mediate biosynthetic protein transport from the ER, via the Golgi up to the trans Golgi network. Coatomer complex is required for budding from Golgi membranes, and is essential for the retrograde Golgi-to-ER transport of dilysine-tagged proteins. The sequence is that of Coatomer subunit beta'-3 from Arabidopsis thaliana (Mouse-ear cress).